Reading from the N-terminus, the 298-residue chain is MTIDLSSMITETRNPASVEIDQLPTLEMLRVINQEDQQVALAVSQLLPEITRAVDAIAAAFGKGGRLVYIGAGTSGRLGILDASECPPTYGVSAEQVVGLIAGGHKAILQAVENAEDDAELGAQDLKNIQFCANDVLVGIAASGRTPYVLGAMAHARAVGATVCSISCNPGSPLAQAADISMVAVVGPEIVTGSSRMKAGTAQKLILNMLSTGAMIRTGKVYGNLMVDVEATNAKLVERQKRIVMEATDCERAVAERALAQADNHCKTAIVMILAGLTADEARTRLQSSNGFISQCTH.

The SIS domain occupies 57–220 (IAAAFGKGGR…STGAMIRTGK (164 aa)). The Proton donor role is filled by Glu-85. The active site involves Glu-116.

Belongs to the GCKR-like family. MurNAc-6-P etherase subfamily. As to quaternary structure, homodimer.

It catalyses the reaction N-acetyl-D-muramate 6-phosphate + H2O = N-acetyl-D-glucosamine 6-phosphate + (R)-lactate. The protein operates within amino-sugar metabolism; 1,6-anhydro-N-acetylmuramate degradation. It functions in the pathway amino-sugar metabolism; N-acetylmuramate degradation. Its pathway is cell wall biogenesis; peptidoglycan recycling. In terms of biological role, specifically catalyzes the cleavage of the D-lactyl ether substituent of MurNAc 6-phosphate, producing GlcNAc 6-phosphate and D-lactate. Together with AnmK, is also required for the utilization of anhydro-N-acetylmuramic acid (anhMurNAc) either imported from the medium or derived from its own cell wall murein, and thus plays a role in cell wall recycling. The chain is N-acetylmuramic acid 6-phosphate etherase from Aeromonas hydrophila subsp. hydrophila (strain ATCC 7966 / DSM 30187 / BCRC 13018 / CCUG 14551 / JCM 1027 / KCTC 2358 / NCIMB 9240 / NCTC 8049).